An 89-amino-acid polypeptide reads, in one-letter code: MSLNAETKAAIVADYARGEGDTGSPEVQVALLTASINHLQGHFQAHKGDHHSRRGLLRMVSRRRKLLDYLKGKDLARYQDLIKRLGLRR.

Belongs to the universal ribosomal protein uS15 family. As to quaternary structure, part of the 30S ribosomal subunit. Forms a bridge to the 50S subunit in the 70S ribosome, contacting the 23S rRNA.

One of the primary rRNA binding proteins, it binds directly to 16S rRNA where it helps nucleate assembly of the platform of the 30S subunit by binding and bridging several RNA helices of the 16S rRNA. In terms of biological role, forms an intersubunit bridge (bridge B4) with the 23S rRNA of the 50S subunit in the ribosome. The chain is Small ribosomal subunit protein uS15 from Vibrio vulnificus (strain YJ016).